A 294-amino-acid chain; its full sequence is Mitochondrial substrate carrier family protein ucpB (294 aa).

Residues 1–10 (MTSQESIGIK) lie on the Mitochondrial intermembrane side of the membrane. Solcar repeat units lie at residues 9–93 (IKFL…IKNY), 101–187 (TNLL…IKHM), and 197–288 (DGLQ…LRKV). Residues 11-31 (FLFGGLSCMGAAVVSNPVDVL) traverse the membrane as a helical segment. The Mitochondrial matrix portion of the chain corresponds to 32–67 (KTRFQIHGEGIDSKSLGLVNGTIKIIKNEGISAMYK). A helical transmembrane segment spans residues 68–88 (GLTPSLLREATYSTLRMGGYD). At 89-106 (VIKNYFIDSNGKTNLLSK) the chain is on the mitochondrial intermembrane side. A helical membrane pass occupies residues 107–127 (VTSGALSGALGACITSPTDLI). Topologically, residues 128–161 (KVRMQASSKGVKYDSISSAFKEIIAKEGIKGLWK) are mitochondrial matrix. The helical transmembrane segment at 162-182 (GVGPTTQRAALLTASQIPSYD) threads the bilayer. The Mitochondrial intermembrane segment spans residues 183–192 (HIKHMILDHG). The chain crosses the membrane as a helical span at residues 193 to 213 (IIQVDGLQVHIVSSIFAGLIA). Residues 214–267 (SITTSPVDLVKTRIMNQPFDSNGVGLIYKSSYDCFKKTFQSEGISGLYKGFLPN) lie on the Mitochondrial matrix side of the membrane. Residues 268–285 (WFRIGPHTIVTFILYEYL) traverse the membrane as a helical segment. Topologically, residues 286–294 (RKVSGIKPI) are mitochondrial intermembrane.

It belongs to the mitochondrial carrier (TC 2.A.29) family.

It localises to the mitochondrion inner membrane. Its function is as follows. Mitochondrial solute carriers shuttle metabolites, nucleotides, and cofactors through the mitochondrial inner membrane. The polypeptide is Mitochondrial substrate carrier family protein ucpB (ucpB) (Dictyostelium discoideum (Social amoeba)).